The following is a 251-amino-acid chain: Probable transcriptional regulatory protein Cgl1663/cg1872 (251 aa).

A disordered region spans residues 1–22 (MSGHSKWATTKHKKAANDAKRG).

This sequence belongs to the TACO1 family.

Its subcellular location is the cytoplasm. The polypeptide is Probable transcriptional regulatory protein Cgl1663/cg1872 (Corynebacterium glutamicum (strain ATCC 13032 / DSM 20300 / JCM 1318 / BCRC 11384 / CCUG 27702 / LMG 3730 / NBRC 12168 / NCIMB 10025 / NRRL B-2784 / 534)).